Here is a 196-residue protein sequence, read N- to C-terminus: MAKNGLVLCILVVSLLLDQTDGYPSRMKARKHSKRRVKAKDDDLKSQVEKLWREVNALKEMQALQTVCLRGTKVHKKCYLASEGLKHYHEANEDCISKGGTLVVPRNSDEINALRDYGKRSLPGVNDFWLGINDMVTEGKFLDVHGFAVSFLNWDRAQPSGGKRENCVLFSQSAQGKWSDEACRSSKRYICEFIIP.

The first 22 residues, 1 to 22, serve as a signal peptide directing secretion; the sequence is MAKNGLVLCILVVSLLLDQTDG. Disulfide bonds link Cys-68–Cys-78, Cys-95–Cys-191, and Cys-167–Cys-183. Positions 74–192 constitute a C-type lectin domain; the sequence is VHKKCYLASE…CRSSKRYICE (119 aa).

It localises to the secreted. Functionally, promotes cell adhesion to laminin and fibronectin. The polypeptide is C-type lectin domain family 3 member A (Clec3a) (Mus musculus (Mouse)).